Reading from the N-terminus, the 336-residue chain is 4-hydroxy-2-oxovalerate aldolase (336 aa).

The 251-residue stretch at 5 to 255 folds into the Pyruvate carboxyltransferase domain; it reads IRIIDSTLRD…ETGVDLYKIM (251 aa). A substrate-binding site is contributed by 13–14; it reads RD. D14 contacts Mn(2+). The active-site Proton acceptor is H17. Substrate-binding residues include S167 and H194. Mn(2+) contacts are provided by H194 and H196. Substrate is bound at residue Y285.

The protein belongs to the 4-hydroxy-2-oxovalerate aldolase family.

It catalyses the reaction (S)-4-hydroxy-2-oxopentanoate = acetaldehyde + pyruvate. This is 4-hydroxy-2-oxovalerate aldolase (mhpE) from Carboxydothermus hydrogenoformans (strain ATCC BAA-161 / DSM 6008 / Z-2901).